The primary structure comprises 239 residues: ATP-dependent dethiobiotin synthetase BioD (239 aa).

22–27 (GIGKTV) serves as a coordination point for ATP. Thr26 is a binding site for Mg(2+). Lys47 is an active-site residue. Thr51 contributes to the substrate binding site. Residues Asp59, 124–127 (EGVG), and 184–185 (NR) contribute to the ATP site. Residues Asp59 and Glu124 each coordinate Mg(2+).

Belongs to the dethiobiotin synthetase family. Homodimer. Mg(2+) serves as cofactor.

The protein resides in the cytoplasm. It catalyses the reaction (7R,8S)-7,8-diammoniononanoate + CO2 + ATP = (4R,5S)-dethiobiotin + ADP + phosphate + 3 H(+). It functions in the pathway cofactor biosynthesis; biotin biosynthesis; biotin from 7,8-diaminononanoate: step 1/2. Catalyzes a mechanistically unusual reaction, the ATP-dependent insertion of CO2 between the N7 and N8 nitrogen atoms of 7,8-diaminopelargonic acid (DAPA, also called 7,8-diammoniononanoate) to form a ureido ring. This is ATP-dependent dethiobiotin synthetase BioD from Chlorobaculum tepidum (strain ATCC 49652 / DSM 12025 / NBRC 103806 / TLS) (Chlorobium tepidum).